Consider the following 168-residue polypeptide: Nicotinamide-nucleotide adenylyltransferase (168 aa).

This sequence belongs to the archaeal NMN adenylyltransferase family.

Its subcellular location is the cytoplasm. It carries out the reaction beta-nicotinamide D-ribonucleotide + ATP + H(+) = diphosphate + NAD(+). It functions in the pathway cofactor biosynthesis; NAD(+) biosynthesis; NAD(+) from nicotinamide D-ribonucleotide: step 1/1. In Methanocorpusculum labreanum (strain ATCC 43576 / DSM 4855 / Z), this protein is Nicotinamide-nucleotide adenylyltransferase.